A 358-amino-acid chain; its full sequence is GTPase Obg (358 aa).

One can recognise an Obg domain in the interval 1–159 (MKFLDEAKVY…RWIWLRLKLI (159 aa)). The region spanning 160 to 327 (ADAGLVGLPN…VLRALVEVIG (168 aa)) is the OBG-type G domain. GTP contacts are provided by residues 166–173 (GLPNAGKS), 191–195 (FTTLH), 212–215 (DIPG), 279–282 (NKID), and 308–310 (SGV). Mg(2+) is bound by residues Ser173 and Thr193. The tract at residues 335–358 (AKGADASAAQAMETPVARAKPWSP) is disordered.

It belongs to the TRAFAC class OBG-HflX-like GTPase superfamily. OBG GTPase family. In terms of assembly, monomer. Requires Mg(2+) as cofactor.

Its subcellular location is the cytoplasm. An essential GTPase which binds GTP, GDP and possibly (p)ppGpp with moderate affinity, with high nucleotide exchange rates and a fairly low GTP hydrolysis rate. Plays a role in control of the cell cycle, stress response, ribosome biogenesis and in those bacteria that undergo differentiation, in morphogenesis control. The protein is GTPase Obg of Nitrobacter winogradskyi (strain ATCC 25391 / DSM 10237 / CIP 104748 / NCIMB 11846 / Nb-255).